Here is a 652-residue protein sequence, read N- to C-terminus: Acetyl-coenzyme A synthetase (652 aa).

CoA is bound by residues 189–192 (RGGK) and Ser311. ATP is bound by residues 387 to 389 (GEP), 411 to 416 (DTWWQT), Asp500, and Arg515. Ser523 provides a ligand contact to CoA. Arg526 contributes to the ATP binding site. Positions 537, 539, and 542 each coordinate Mg(2+). Residue Lys584 participates in CoA binding. N6-acetyllysine is present on Lys609.

This sequence belongs to the ATP-dependent AMP-binding enzyme family. Mg(2+) is required as a cofactor. In terms of processing, acetylated. Deacetylation by the SIR2-homolog deacetylase activates the enzyme.

The catalysed reaction is acetate + ATP + CoA = acetyl-CoA + AMP + diphosphate. Catalyzes the conversion of acetate into acetyl-CoA (AcCoA), an essential intermediate at the junction of anabolic and catabolic pathways. AcsA undergoes a two-step reaction. In the first half reaction, AcsA combines acetate with ATP to form acetyl-adenylate (AcAMP) intermediate. In the second half reaction, it can then transfer the acetyl group from AcAMP to the sulfhydryl group of CoA, forming the product AcCoA. The protein is Acetyl-coenzyme A synthetase of Bartonella quintana (strain Toulouse) (Rochalimaea quintana).